Reading from the N-terminus, the 323-residue chain is Aquaporin-4 (323 aa).

The Cytoplasmic segment spans residues Met1–Lys36. 2 S-palmitoyl cysteine lipidation sites follow: Cys13 and Cys17. Residues Ala37–Ile57 form a helical membrane-spanning segment. The Extracellular segment spans residues Asn58–Asp69. Residues Met70–Gly89 traverse the membrane as a helical segment. The Cytoplasmic segment spans residues His90–Gly93. Positions Gly94–Thr101 form an intramembrane region, discontinuously helical. Residues Asn97 to Ala99 carry the NPA 1 motif. Residues Val102–Ser115 are Cytoplasmic-facing. Ser111 is subject to Phosphoserine; by PKG. The chain crosses the membrane as a helical span at residues Val116–Val136. Over Thr137 to Ser155 the chain is Extracellular. The N-linked (GlcNAc...) asparagine glycan is linked to Asn153. Residues Ala156–Ala176 traverse the membrane as a helical segment. Over Ser177 to Asp184 the chain is Cytoplasmic. Ser180 carries the phosphoserine; by PKC modification. A helical transmembrane segment spans residues Val185–Ile205. Asn206 is a glycosylation site (N-linked (GlcNAc...) asparagine). Residues Asn206–Thr208 are Extracellular-facing. The segment at residues Gly209 to Val222 is an intramembrane region (discontinuously helical). The NPA 2 motif lies at Asn213–Ala215. The Extracellular segment spans residues Ile223–Trp231. Residues Ile232–Phe252 traverse the membrane as a helical segment. The Cytoplasmic segment spans residues Cys253–Val323. A phosphoserine mark is found at Ser276 and Ser285. At Thr289 the chain carries Phosphothreonine. Ser321 is modified (phosphoserine).

It belongs to the MIP/aquaporin (TC 1.A.8) family. In terms of assembly, homotetramer. The tetramers can form oligomeric arrays in membranes. The size of the oligomers differs between tissues and is smaller in skeletal muscle than in brain. Interaction between AQP4 oligomeric arrays in close-by cells can contribute to cell-cell adhesion. Part of a complex containing MLC1, TRPV4, HEPACAM and ATP1B1. In terms of processing, phosphorylation by PKC at Ser-180 reduces conductance by 50%. Phosphorylation by PKG at Ser-111 in response to glutamate increases conductance by 40%. Post-translationally, isoform 2: Palmitoylated on its N-terminal region. Isoform 1: Not palmitoylated. Detected in brain and lung.

Its subcellular location is the cell membrane. It localises to the basolateral cell membrane. It is found in the endosome membrane. The protein resides in the sarcolemma. The protein localises to the cell projection. It carries out the reaction H2O(in) = H2O(out). In terms of biological role, forms a water-specific channel. Plays an important role in brain water homeostasis and in glymphatic solute transport. Required for a normal rate of water exchange across the blood brain interface. Required for normal levels of cerebrospinal fluid influx into the brain cortex and parenchyma along paravascular spaces that surround penetrating arteries, and for normal drainage of interstitial fluid along paravenous drainage pathways. Thereby, it is required for normal clearance of solutes from the brain interstitial fluid, including soluble beta-amyloid peptides derived from APP. Plays a redundant role in urinary water homeostasis and urinary concentrating ability. In Bos taurus (Bovine), this protein is Aquaporin-4 (AQP4).